Consider the following 281-residue polypeptide: L-ornithine N(alpha)-acyltransferase (281 aa).

The protein belongs to the acetyltransferase family. OlsB subfamily.

The catalysed reaction is a (3R)-hydroxyacyl-[ACP] + L-ornithine = a lyso-ornithine lipid + holo-[ACP] + H(+). Its pathway is lipid metabolism. In terms of biological role, catalyzes the first step in the biosynthesis of ornithine lipids, which are phosphorus-free membrane lipids. Catalyzes the 3-hydroxyacyl-acyl carrier protein-dependent acylation of ornithine to form lyso-ornithine lipid (LOL). This chain is L-ornithine N(alpha)-acyltransferase, found in Brucella abortus (strain 2308).